A 922-amino-acid chain; its full sequence is NEDD4-like E3 ubiquitin-protein ligase WWP1 (922 aa).

In terms of domain architecture, C2 spans 1-116; the sequence is MATASPRSDT…IHNRKLERVK (116 aa). Polar residues-rich tracts occupy residues 210-219, 243-278, 286-302, 314-323, and 340-351; these read GDNTPSSPSQ, NGESSSFAPTDNASVTGTPVVSEENALSPNCTSTTV, ILTSSENNECIPSTSAE, DTSNSRSSSA, and RQQSGNANTETL. Residues 210-388 are disordered; that stretch reads GDNTPSSPSQ…RPQPLPPGWE (179 aa). WW domains follow at residues 349–382, 381–414, 456–489, and 496–529; these read ETLPSGWEQRKDPHGRTYYVDHNTRTTTWERPQP, QPLPPGWERRVDDRRRVYYVDHNTRTTTWQRPTM, GPLPPGWEKRVDSTDRVYFVNHNTKTTQWEDPRT, and EPLPEGWEIRYTREGVRYFVDHNTRTTTFKDPRN. Residues 349–531 form a required for interaction with and ubiquitination of AMOTL2. Required for interaction with YAP1 region; sequence ETLPSGWEQR…TTFKDPRNGK (183 aa). The HECT domain maps to 588 to 922; the sequence is KPYDLRRRLY…IEETEGFGQE (335 aa). Residue Cys890 is the Glycyl thioester intermediate of the active site.

In terms of assembly, interacts with the Crumbs complex components PALS1 and PATJ; interaction with the Crumbs complex is enhanced by WWP1's interaction with AMOTL2 and facilitates WWP1 localization to the plasma membrane. Interaction with the Crumbs complex promotes WWP1 monoubiquitination of AMOTL2, which activates the Hippo signaling pathway. Binds KLF2 and HIVEP3. Binds SCNN1A, SCNN1B, SCNN1G, WBP1, WBP2, DRPLA and adenovirus type 2 PIII. Interacts with RNF11. Interacts with SPART. Interacts with ERBB4 isoforms JM-B CYT-1 and JM-A CYT-1. Interacts with SMAD1, SMAD2, SMAD3, SMAD5, SMAD6, SMAD7, TGFBR1 and TGFBR2. Associates with the TGFBR1:TGFBR2 receptor complex in presence of SMAD7. Interacts with SKIL isoform 1. Interacts with TP63 isoform 1 and isoform 2. Interacts with STAMBP and RNF11. Interacts with NDFIP1 and NDFIP2; this interaction activates the E3 ubiquitin-protein ligase. Interacts with TGIF. Interacts (via WW domains) with ARRDC1, ARRDC2 and ARRDC3. (Microbial infection) Interacts with HTLV-1 protein Gag. As to quaternary structure, (Microbial infection) Interacts with ebola virus protein VP40. In terms of processing, auto-ubiquitinated and ubiquitinated by RNF11. Detected in heart, placenta, pancreas, kidney, liver, skeletal muscle, bone marrow, fetal brain, and at much lower levels in adult brain and lung. Isoform 1 and isoform 5 predominate in all tissues tested, except in testis and bone marrow, where isoform 5 is expressed at much higher levels than isoform 1.

It localises to the cytoplasm. The protein localises to the cell membrane. Its subcellular location is the nucleus. The protein resides in the cell junction. It catalyses the reaction S-ubiquitinyl-[E2 ubiquitin-conjugating enzyme]-L-cysteine + [acceptor protein]-L-lysine = [E2 ubiquitin-conjugating enzyme]-L-cysteine + N(6)-ubiquitinyl-[acceptor protein]-L-lysine.. Its pathway is protein modification; protein ubiquitination. With respect to regulation, activated by NDFIP1- and NDFIP2-binding. E3 ubiquitin-protein ligase which accepts ubiquitin from an E2 ubiquitin-conjugating enzyme in the form of a thioester and then directly transfers the ubiquitin to targeted substrates. Ubiquitinates ERBB4 isoforms JM-A CYT-1 and JM-B CYT-1, KLF2, KLF5 and TP63 and promotes their proteasomal degradation. Ubiquitinates RNF11 without targeting it for degradation. Ubiquitinates and promotes degradation of TGFBR1; the ubiquitination is enhanced by SMAD7. Ubiquitinates SMAD6 and SMAD7. Ubiquitinates and promotes degradation of SMAD2 in response to TGF-beta signaling, which requires interaction with TGIF. Activates the Hippo signaling pathway in response to cell contact inhibition and recruitment to the Crumbs complex at the cell membrane. Monoubiquitinates AMOTL2 which facilitates its interaction with and activation of LATS2. LATS2 then phosphorylates YAP1, excluding it from the nucleus and therefore ultimately represses YAP1-driven transcription of target genes. This chain is NEDD4-like E3 ubiquitin-protein ligase WWP1 (WWP1), found in Homo sapiens (Human).